The sequence spans 356 residues: Alanine racemase, catabolic (356 aa).

The active-site Proton acceptor; specific for D-alanine is the lysine 35. At lysine 35 the chain carries N6-(pyridoxal phosphate)lysine. Arginine 130 contributes to the substrate binding site. Catalysis depends on tyrosine 253, which acts as the Proton acceptor; specific for L-alanine. Methionine 301 contributes to the substrate binding site.

It belongs to the alanine racemase family. Pyridoxal 5'-phosphate serves as cofactor.

The catalysed reaction is L-alanine = D-alanine. In terms of biological role, isomerizes L-alanine to D-alanine which is then oxidized to pyruvate by DadA. The chain is Alanine racemase, catabolic (dadX) from Escherichia coli O6:H1 (strain CFT073 / ATCC 700928 / UPEC).